Reading from the N-terminus, the 650-residue chain is Acetyl-coenzyme A synthetase (650 aa).

CoA-binding positions include 191–194 (RGGR), threonine 311, and asparagine 335. Residues 387-389 (GEP), 411-416 (DTWWQT), aspartate 500, and arginine 515 contribute to the ATP site. Serine 523 contributes to the CoA binding site. Position 526 (arginine 526) interacts with ATP. Mg(2+) contacts are provided by valine 537, histidine 539, and valine 542. Arginine 584 contacts CoA. Position 609 is an N6-acetyllysine (lysine 609).

It belongs to the ATP-dependent AMP-binding enzyme family. Mg(2+) serves as cofactor. Acetylated. Deacetylation by the SIR2-homolog deacetylase activates the enzyme.

The catalysed reaction is acetate + ATP + CoA = acetyl-CoA + AMP + diphosphate. In terms of biological role, catalyzes the conversion of acetate into acetyl-CoA (AcCoA), an essential intermediate at the junction of anabolic and catabolic pathways. AcsA undergoes a two-step reaction. In the first half reaction, AcsA combines acetate with ATP to form acetyl-adenylate (AcAMP) intermediate. In the second half reaction, it can then transfer the acetyl group from AcAMP to the sulfhydryl group of CoA, forming the product AcCoA. This chain is Acetyl-coenzyme A synthetase, found in Shewanella oneidensis (strain ATCC 700550 / JCM 31522 / CIP 106686 / LMG 19005 / NCIMB 14063 / MR-1).